The following is a 160-amino-acid chain: Transmembrane protein 191A (160 aa).

A helical membrane pass occupies residues 24 to 44; that stretch reads FCFPLDFVSNLFWIFASKFII.

The protein belongs to the TMEM191 family.

The protein localises to the membrane. The chain is Transmembrane protein 191A (TMEM191A) from Homo sapiens (Human).